We begin with the raw amino-acid sequence, 1146 residues long: DNA polymerase II large subunit (1146 aa).

The protein belongs to the archaeal DNA polymerase II family. Heterodimer of a large subunit and a small subunit.

It catalyses the reaction DNA(n) + a 2'-deoxyribonucleoside 5'-triphosphate = DNA(n+1) + diphosphate. The catalysed reaction is Exonucleolytic cleavage in the 3'- to 5'-direction to yield nucleoside 5'-phosphates.. Functionally, possesses two activities: a DNA synthesis (polymerase) and an exonucleolytic activity that degrades single-stranded DNA in the 3'- to 5'-direction. Has a template-primer preference which is characteristic of a replicative DNA polymerase. The polypeptide is DNA polymerase II large subunit (Methanosarcina barkeri (strain Fusaro / DSM 804)).